Consider the following 401-residue polypeptide: Beta-ketoadipyl-CoA thiolase (401 aa).

Cys91 serves as the catalytic Acyl-thioester intermediate. Catalysis depends on proton acceptor residues His357 and Cys387.

This sequence belongs to the thiolase-like superfamily. Thiolase family. As to quaternary structure, homotetramer.

It carries out the reaction succinyl-CoA + acetyl-CoA = 3-oxoadipyl-CoA + CoA. It participates in aromatic compound metabolism; beta-ketoadipate pathway; acetyl-CoA and succinyl-CoA from 3-oxoadipate: step 2/2. Catalyzes thiolytic cleavage of beta-ketoadipyl-CoA to succinyl-CoA and acetyl-CoA. This chain is Beta-ketoadipyl-CoA thiolase (pcaF), found in Pseudomonas knackmussii (strain DSM 6978 / CCUG 54928 / LMG 23759 / B13).